An 89-amino-acid polypeptide reads, in one-letter code: Small ribosomal subunit protein uS15 (89 aa).

It belongs to the universal ribosomal protein uS15 family. As to quaternary structure, part of the 30S ribosomal subunit. Forms a bridge to the 50S subunit in the 70S ribosome, contacting the 23S rRNA.

One of the primary rRNA binding proteins, it binds directly to 16S rRNA where it helps nucleate assembly of the platform of the 30S subunit by binding and bridging several RNA helices of the 16S rRNA. In terms of biological role, forms an intersubunit bridge (bridge B4) with the 23S rRNA of the 50S subunit in the ribosome. The sequence is that of Small ribosomal subunit protein uS15 from Bordetella parapertussis (strain 12822 / ATCC BAA-587 / NCTC 13253).